Here is a 1578-residue protein sequence, read N- to C-terminus: Pentafunctional AROM polypeptide (1578 aa).

Positions 1–384 (MAEPTKIKIL…YEPKASVVPN (384 aa)) are 3-dehydroquinate synthase. NAD(+) is bound by residues 44-46 (DTN), 81-84 (EVSK), 114-116 (GGV), and aspartate 119. Arginine 130 is a 7-phospho-2-dehydro-3-deoxy-D-arabino-heptonate binding site. 139 to 140 (TT) serves as a coordination point for NAD(+). 7-phospho-2-dehydro-3-deoxy-D-arabino-heptonate is bound by residues aspartate 146 and lysine 152. Residue lysine 161 participates in NAD(+) binding. Asparagine 162 lines the 7-phospho-2-dehydro-3-deoxy-D-arabino-heptonate pocket. NAD(+) contacts are provided by residues 179-182 (FLET) and asparagine 190. Glutamate 194 contributes to the Zn(2+) binding site. 7-phospho-2-dehydro-3-deoxy-D-arabino-heptonate is bound by residues 194-197 (EVIK) and lysine 250. The active-site Proton acceptor; for 3-dehydroquinate synthase activity is glutamate 260. Residues 264–268 (RNLLN) and histidine 271 contribute to the 7-phospho-2-dehydro-3-deoxy-D-arabino-heptonate site. Residue histidine 271 coordinates Zn(2+). The Proton acceptor; for 3-dehydroquinate synthase activity role is filled by histidine 275. The 7-phospho-2-dehydro-3-deoxy-D-arabino-heptonate site is built by histidine 287 and lysine 356. Histidine 287 is a Zn(2+) binding site. Residues 397-842 (VHPGVEPASN…WDTLRQKFSA (446 aa)) are EPSP synthase. The active-site For EPSP synthase activity is the cysteine 824. Residues 864–1055 (TASVFIIGMR…KRKKHSFFVS (192 aa)) are shikimate kinase. 871 to 878 (GMRGAGKT) contributes to the ATP binding site. A 3-dehydroquinase region spans residues 1056 to 1276 (LTLPDLRTAG…AAPGQLSATE (221 aa)). The active-site Proton acceptor; for 3-dehydroquinate dehydratase activity is histidine 1179. Lysine 1207 serves as the catalytic Schiff-base intermediate with substrate; for 3-dehydroquinate dehydratase activity. The interval 1289–1578 (QKKFAVFGTP…EDARAAVLSS (290 aa)) is shikimate dehydrogenase.

It in the N-terminal section; belongs to the sugar phosphate cyclases superfamily. Dehydroquinate synthase family. This sequence in the 2nd section; belongs to the EPSP synthase family. The protein in the 3rd section; belongs to the shikimate kinase family. In the 4th section; belongs to the type-I 3-dehydroquinase family. It in the C-terminal section; belongs to the shikimate dehydrogenase family. As to quaternary structure, homodimer. Requires Zn(2+) as cofactor.

Its subcellular location is the cytoplasm. The enzyme catalyses 7-phospho-2-dehydro-3-deoxy-D-arabino-heptonate = 3-dehydroquinate + phosphate. The catalysed reaction is 3-dehydroquinate = 3-dehydroshikimate + H2O. It carries out the reaction shikimate + NADP(+) = 3-dehydroshikimate + NADPH + H(+). It catalyses the reaction shikimate + ATP = 3-phosphoshikimate + ADP + H(+). The enzyme catalyses 3-phosphoshikimate + phosphoenolpyruvate = 5-O-(1-carboxyvinyl)-3-phosphoshikimate + phosphate. It participates in metabolic intermediate biosynthesis; chorismate biosynthesis; chorismate from D-erythrose 4-phosphate and phosphoenolpyruvate: step 2/7. The protein operates within metabolic intermediate biosynthesis; chorismate biosynthesis; chorismate from D-erythrose 4-phosphate and phosphoenolpyruvate: step 3/7. Its pathway is metabolic intermediate biosynthesis; chorismate biosynthesis; chorismate from D-erythrose 4-phosphate and phosphoenolpyruvate: step 4/7. It functions in the pathway metabolic intermediate biosynthesis; chorismate biosynthesis; chorismate from D-erythrose 4-phosphate and phosphoenolpyruvate: step 5/7. It participates in metabolic intermediate biosynthesis; chorismate biosynthesis; chorismate from D-erythrose 4-phosphate and phosphoenolpyruvate: step 6/7. The AROM polypeptide catalyzes 5 consecutive enzymatic reactions in prechorismate polyaromatic amino acid biosynthesis. The sequence is that of Pentafunctional AROM polypeptide from Aspergillus flavus (strain ATCC 200026 / FGSC A1120 / IAM 13836 / NRRL 3357 / JCM 12722 / SRRC 167).